The primary structure comprises 459 residues: V-type ATP synthase beta chain (459 aa).

The protein belongs to the ATPase alpha/beta chains family.

In terms of biological role, produces ATP from ADP in the presence of a proton gradient across the membrane. The V-type beta chain is a regulatory subunit. The chain is V-type ATP synthase beta chain from Thermoanaerobacter pseudethanolicus (strain ATCC 33223 / 39E) (Clostridium thermohydrosulfuricum).